The sequence spans 380 residues: 8-amino-7-oxononanoate synthase (380 aa).

Position 26 (Arg26) interacts with substrate. Position 104–105 (104–105 (GY)) interacts with pyridoxal 5'-phosphate. His129 lines the substrate pocket. Pyridoxal 5'-phosphate contacts are provided by residues Ser175, 200–203 (DEAH), and 232–235 (TLSK). An N6-(pyridoxal phosphate)lysine modification is found at Lys235. A substrate-binding site is contributed by Thr345.

The protein belongs to the class-II pyridoxal-phosphate-dependent aminotransferase family. BioF subfamily. Homodimer. The cofactor is pyridoxal 5'-phosphate.

It catalyses the reaction 6-carboxyhexanoyl-[ACP] + L-alanine + H(+) = (8S)-8-amino-7-oxononanoate + holo-[ACP] + CO2. It participates in cofactor biosynthesis; biotin biosynthesis. Its function is as follows. Catalyzes the decarboxylative condensation of pimeloyl-[acyl-carrier protein] and L-alanine to produce 8-amino-7-oxononanoate (AON), [acyl-carrier protein], and carbon dioxide. The protein is 8-amino-7-oxononanoate synthase of Mycolicibacterium vanbaalenii (strain DSM 7251 / JCM 13017 / BCRC 16820 / KCTC 9966 / NRRL B-24157 / PYR-1) (Mycobacterium vanbaalenii).